The following is a 1272-amino-acid chain: AF4/FMR2 family member 2 (1272 aa).

Disordered stretches follow at residues 93–183 and 200–223; these read IPKN…LTQD and PQIG…SSGE. A compositionally biased stretch (polar residues) spans 97-107; the sequence is SVPQNPNNKNE. Residues 151-160 show a composition bias toward basic and acidic residues; that stretch reads SKPEWSRDSH. A compositionally biased stretch (polar residues) spans 161–183; the sequence is NPSTVLASQASGQPNKMQTLTQD. Positions 212-223 are enriched in basic and acidic residues; that stretch reads AKEDSNPKSSGE. The residue at position 391 (Ser-391) is a Phosphoserine. 4 disordered regions span residues 418-491, 535-687, 779-829, and 842-903; these read KAKP…KWQL, TNAS…DQEE, SLHA…PEKK, and PPCI…QDKN. The segment covering 426-438 has biased composition (pro residues); it reads VNPPLATPQPPPA. The segment covering 439–452 has biased composition (low complexity); it reads VQASGGSGSSSESE. Thr-478 is modified (phosphothreonine). Over residues 543–558 the composition is skewed to basic and acidic residues; the sequence is EPKERPLLSLIREKAR. A compositionally biased stretch (polar residues) spans 576-586; that stretch reads STTSETVSQRT. Basic and acidic residues predominate over residues 616–629; it reads PKEKESVELHDPPR. Basic residues predominate over residues 630–640; the sequence is GRNKATAHKPA. Residues 818–829 are compositionally biased toward basic and acidic residues; sequence PTEVAEKIPEKK. Pro residues-rich tracts occupy residues 844–853 and 874–883; these read CISPAPPHKP and FPPPLSPLPE.

It belongs to the AF4 family.

It is found in the nucleus speckle. Functionally, RNA-binding protein. Might be involved in alternative splicing regulation through an interaction with G-quartet RNA structure. The polypeptide is AF4/FMR2 family member 2 (AFF2) (Pongo pygmaeus (Bornean orangutan)).